The primary structure comprises 256 residues: UPF0259 membrane protein plu2479 (256 aa).

The next 5 membrane-spanning stretches (helical) occupy residues 23–43 (TLTLAVLAALVTTLLGHLFIP), 89–109 (IFSSMIGSVLLVGGVLTLVAA), 132–152 (LFLLLLICTLLIQFGLMLMLV), 192–212 (LLVPAILLWLTARLLLVFIID), and 221–241 (MAGIILGVFNNLISAILLIYL).

The protein belongs to the UPF0259 family.

Its subcellular location is the cell inner membrane. This chain is UPF0259 membrane protein plu2479, found in Photorhabdus laumondii subsp. laumondii (strain DSM 15139 / CIP 105565 / TT01) (Photorhabdus luminescens subsp. laumondii).